A 156-amino-acid chain; its full sequence is Small ribosomal subunit protein uS7 (156 aa).

Belongs to the universal ribosomal protein uS7 family. In terms of assembly, part of the 30S ribosomal subunit. Contacts proteins S9 and S11.

In terms of biological role, one of the primary rRNA binding proteins, it binds directly to 16S rRNA where it nucleates assembly of the head domain of the 30S subunit. Is located at the subunit interface close to the decoding center, probably blocks exit of the E-site tRNA. In Clostridium acetobutylicum (strain ATCC 824 / DSM 792 / JCM 1419 / IAM 19013 / LMG 5710 / NBRC 13948 / NRRL B-527 / VKM B-1787 / 2291 / W), this protein is Small ribosomal subunit protein uS7.